The primary structure comprises 131 residues: Profilin-5 (131 aa).

A disulfide bridge links Cys-13 with Cys-115. Positions 81-97 (VVIRGKKGTGGITIKKT) match the Involved in PIP2 interaction motif. A Phosphothreonine modification is found at Thr-111.

The protein belongs to the profilin family. Multimer. Occurs in many kinds of cells as a complex with monomeric actin in a 1:1 ratio. Post-translationally, phosphorylated by MAP kinases. In terms of tissue distribution, expressed in vegetative tissues. Present in shoots, roots and coleoptiles. Also detected in endosperm and pollen.

Its subcellular location is the cytoplasm. The protein resides in the cytoskeleton. Actin binding is enhanced by calcium Ca(2+). Binds to actin and affects the structure of the cytoskeleton. At high concentrations, profilin prevents the polymerization of actin, whereas it enhances it at low concentrations. By binding to PIP2, it inhibits the formation of IP3 and DG. Has a high affinity for poly-proline. This is Profilin-5 from Zea mays (Maize).